The sequence spans 185 residues: MTLPRFDQIRPKIEQHIREVKDFPKKGINFRDIMPLFTNPQLVNELCVVIADHVRHTVGHVDSVAGLEARGFLFGPQVAIQLGVPFVPIRKKGKLPGATIEASYVKEYGEDRVEIQEGAIKNGDIVFLIDDLLATGGTLRAATDLVVKAGGKVGEAFVLIELAPLNGRSKLPDVNLTTLISYDSA.

The protein belongs to the purine/pyrimidine phosphoribosyltransferase family.

The protein localises to the cytoplasm. It catalyses the reaction AMP + diphosphate = 5-phospho-alpha-D-ribose 1-diphosphate + adenine. It participates in purine metabolism; AMP biosynthesis via salvage pathway; AMP from adenine: step 1/1. Catalyzes a salvage reaction resulting in the formation of AMP, that is energically less costly than de novo synthesis. This is Adenine phosphoribosyltransferase (aprt-1) from Caenorhabditis elegans.